The following is a 358-amino-acid chain: Period circadian protein (358 aa).

2 consecutive PAS domains span residues 1–120 (GVVM…QTVP) and 138–240 (FIMR…YIIE).

In terms of assembly, forms a heterodimer with timeless (TIM); the complex then translocates into the nucleus. Post-translationally, phosphorylated with a circadian rhythmicity.

It is found in the nucleus. Involved in the generation of biological rhythms. The biological cycle depends on the rhythmic formation and nuclear localization of the tim-per complex. Light induces the degradation of tim, which promotes elimination of per. Nuclear activity of the heterodimer coordinatively regulates per and tim transcription negative feedback loop. Behaves as a negative element in circadian transcriptional loop. Does not appear to bind DNA, suggesting indirect transcriptional inhibition. This Hyalophora cecropia (Cecropia moth) protein is Period circadian protein (per).